Here is a 112-residue protein sequence, read N- to C-terminus: MAEDIEEIRKRKLMELQKKYLEQQKAQEEALKREMELEAQLEAIMRKILTPEARERLGRVKLVKPELARQVELLLVQLYQAGQIRERIDDAKLKRILAEIDARTRRDFKIKW.

It belongs to the PDCD5 family.

This chain is DNA-binding protein TK1278, found in Thermococcus kodakarensis (strain ATCC BAA-918 / JCM 12380 / KOD1) (Pyrococcus kodakaraensis (strain KOD1)).